The sequence spans 386 residues: Transcription factor GTE1 (386 aa).

2 disordered regions span residues 66 to 106 (GAAQ…KHVS) and 340 to 386 (ANKS…AKKA). A compositionally biased stretch (polar residues) spans 68–78 (AQTNTSKSNSG). The region spanning 105-211 (VSSPDLMRQF…EKFEEKWLLI (107 aa)) is the Bromo domain. Residues 263-344 (RESVVQRCRK…EALKAANKSS (82 aa)) form the NET domain. The segment covering 345–358 (GGTNAQNNNNTGTG) has biased composition (low complexity).

Barely detectable in stems, leaves, siliques, and dry seeds, but was present at considerable levels in roots, flowers and imbibited seeds.

The protein localises to the nucleus. Functionally, transcription activator that plays a role in the promotion of seed germination by both negatively and positively regulating the abscisic acid (ABA) and phytochrome A (phyA) transduction pathways, respectively. The protein is Transcription factor GTE1 (GTE1) of Arabidopsis thaliana (Mouse-ear cress).